The chain runs to 269 residues: Cytochrome c oxidase subunit 3 (269 aa).

Transmembrane regions (helical) follow at residues 21–41, 45–65, 90–110, 138–160, 167–187, 205–225, and 247–267; these read PWPI…ALAM, IGNM…ATLW, GFLL…WAYF, PLLN…HALI, ALSG…CQYI, FYAG…MLAI, and VIYL…FYWW.

It belongs to the cytochrome c oxidase subunit 3 family. In terms of assembly, component of the cytochrome c oxidase (complex IV, CIV), a multisubunit enzyme composed of a catalytic core of 3 subunits and several supernumerary subunits. The complex exists as a monomer or a dimer and forms supercomplexes (SCs) in the inner mitochondrial membrane with ubiquinol-cytochrome c oxidoreductase (cytochrome b-c1 complex, complex III, CIII).

The protein localises to the mitochondrion inner membrane. The enzyme catalyses 4 Fe(II)-[cytochrome c] + O2 + 8 H(+)(in) = 4 Fe(III)-[cytochrome c] + 2 H2O + 4 H(+)(out). Functionally, component of the cytochrome c oxidase, the last enzyme in the mitochondrial electron transport chain which drives oxidative phosphorylation. The respiratory chain contains 3 multisubunit complexes succinate dehydrogenase (complex II, CII), ubiquinol-cytochrome c oxidoreductase (cytochrome b-c1 complex, complex III, CIII) and cytochrome c oxidase (complex IV, CIV), that cooperate to transfer electrons derived from NADH and succinate to molecular oxygen, creating an electrochemical gradient over the inner membrane that drives transmembrane transport and the ATP synthase. Cytochrome c oxidase is the component of the respiratory chain that catalyzes the reduction of oxygen to water. Electrons originating from reduced cytochrome c in the intermembrane space (IMS) are transferred via the dinuclear copper A center (CU(A)) of subunit 2 and heme A of subunit 1 to the active site in subunit 1, a binuclear center (BNC) formed by heme A3 and copper B (CU(B)). The BNC reduces molecular oxygen to 2 water molecules using 4 electrons from cytochrome c in the IMS and 4 protons from the mitochondrial matrix. This chain is Cytochrome c oxidase subunit 3 (COX3), found in Lachancea kluyveri (strain ATCC 58438 / CBS 3082 / BCRC 21498 / NBRC 1685 / JCM 7257 / NCYC 543 / NRRL Y-12651) (Yeast).